We begin with the raw amino-acid sequence, 107 residues long: Protein HitA (107 aa).

The region spanning 5–107 is the HIT domain; sequence IFCKIAAKEI…LHIHIMGTPV (103 aa). The Histidine triad motif signature appears at 97 to 101; the sequence is HLHIH.

This Neisseria gonorrhoeae protein is Protein HitA (hitA).